The chain runs to 588 residues: Aspartate--tRNA ligase (588 aa).

E177 lines the L-aspartate pocket. An aspartate region spans residues 201-204 (QLFK). L-aspartate is bound at residue R223. ATP is bound by residues 223 to 225 (RDE) and Q232. H451 is an L-aspartate binding site. E485 is an ATP binding site. R492 serves as a coordination point for L-aspartate. 537 to 540 (GLDR) serves as a coordination point for ATP.

Belongs to the class-II aminoacyl-tRNA synthetase family. Type 1 subfamily. In terms of assembly, homodimer.

It is found in the cytoplasm. The catalysed reaction is tRNA(Asp) + L-aspartate + ATP = L-aspartyl-tRNA(Asp) + AMP + diphosphate. Functionally, catalyzes the attachment of L-aspartate to tRNA(Asp) in a two-step reaction: L-aspartate is first activated by ATP to form Asp-AMP and then transferred to the acceptor end of tRNA(Asp). The protein is Aspartate--tRNA ligase of Staphylococcus carnosus (strain TM300).